The following is an 83-amino-acid chain: Defensin-like protein 194 (83 aa).

The signal sequence occupies residues 1–27; sequence MAMKSVSNFAIFLILFLVTSEISEIEA. 4 disulfides stabilise this stretch: C32-C78, C44-C68, C53-C73, and C57-C75.

This sequence belongs to the DEFL family. Protease inhibitor I18 (RTI/MTI-2) subfamily.

The protein resides in the secreted. This chain is Defensin-like protein 194 (ATTI3), found in Arabidopsis thaliana (Mouse-ear cress).